We begin with the raw amino-acid sequence, 184 residues long: Cysteine-rich atrial secretory protein (184 aa).

Residues 1–26 form the signal peptide; the sequence is MATFQAHFFAAVMCVGVLGLSKLCGA. Intrachain disulfides connect C29-C34, C65-C111, C75-C82, C123-C155, and C135-C144. N74 carries N-linked (GlcNAc...) asparagine glycosylation.

Post-translationally, N-glycosylated. As to expression, highly expressed in atrium. Moderately expressed in the pericardium, pulmonary vein, nephridium, arteria anterior, ovotestis and connective tissue. Low expression found in intestine, lung plexus, diaphragm, subesophageal ganglion, ventricle and digestive gland. Very low expression found in columellar retractor, pedal nerves and cerebral ganglion. Not expressed in hemocytes.

The protein localises to the secreted. The polypeptide is Cysteine-rich atrial secretory protein (Achatina achatina (Giant Ghana snail)).